Reading from the N-terminus, the 581-residue chain is NADH-quinone oxidoreductase subunit C/D (581 aa).

The interval 1–172 (MSAVELVNEL…PPFVMTAARF (172 aa)) is NADH dehydrogenase I subunit C. Residues 196 to 581 (ELMILNYGPH…IDYVMSDVDR (386 aa)) are NADH dehydrogenase I subunit D.

It in the N-terminal section; belongs to the complex I 30 kDa subunit family. This sequence in the C-terminal section; belongs to the complex I 49 kDa subunit family. As to quaternary structure, NDH-1 is composed of 13 different subunits. Subunits NuoB, CD, E, F, and G constitute the peripheral sector of the complex.

It is found in the cell inner membrane. The catalysed reaction is a quinone + NADH + 5 H(+)(in) = a quinol + NAD(+) + 4 H(+)(out). In terms of biological role, NDH-1 shuttles electrons from NADH, via FMN and iron-sulfur (Fe-S) centers, to quinones in the respiratory chain. The immediate electron acceptor for the enzyme in this species is believed to be ubiquinone. Couples the redox reaction to proton translocation (for every two electrons transferred, four hydrogen ions are translocated across the cytoplasmic membrane), and thus conserves the redox energy in a proton gradient. This chain is NADH-quinone oxidoreductase subunit C/D, found in Rhodopseudomonas palustris (strain BisB18).